A 346-amino-acid chain; its full sequence is Phosphoribosylformylglycinamidine cyclo-ligase (346 aa).

This sequence belongs to the AIR synthase family.

Its subcellular location is the cytoplasm. The catalysed reaction is 2-formamido-N(1)-(5-O-phospho-beta-D-ribosyl)acetamidine + ATP = 5-amino-1-(5-phospho-beta-D-ribosyl)imidazole + ADP + phosphate + H(+). The protein operates within purine metabolism; IMP biosynthesis via de novo pathway; 5-amino-1-(5-phospho-D-ribosyl)imidazole from N(2)-formyl-N(1)-(5-phospho-D-ribosyl)glycinamide: step 2/2. This chain is Phosphoribosylformylglycinamidine cyclo-ligase, found in Bacillus licheniformis (strain ATCC 14580 / DSM 13 / JCM 2505 / CCUG 7422 / NBRC 12200 / NCIMB 9375 / NCTC 10341 / NRRL NRS-1264 / Gibson 46).